The primary structure comprises 545 residues: Probable bifunctional tRNA threonylcarbamoyladenosine biosynthesis protein (545 aa).

The kae1 stretch occupies residues 1–329; it reads MDTSKDLICI…YRSDMVEVNW (329 aa). Residues His112, His116, and Tyr133 each coordinate Fe cation. Residues 133 to 137, Asp165, Gly178, Glu182, and Asn262 each bind L-threonylcarbamoyladenylate; that span reads YVSGG. Residue Asp290 participates in Fe cation binding. The Protein kinase domain maps to 344 to 545; the sequence is IIPEHLIGKG…KEVEKRARYL (202 aa). ATP-binding positions include 350 to 358 and Lys371; that span reads IGKGAEADI. Residue Asp463 is the Proton acceptor; for kinase activity of the active site.

The protein in the N-terminal section; belongs to the KAE1 / TsaD family. It in the C-terminal section; belongs to the protein kinase superfamily. Tyr protein kinase family. BUD32 subfamily. In terms of assembly, component of the KEOPS complex that consists of Kae1, Bud32, Cgi121 and Pcc1; the whole complex dimerizes. Requires Fe(2+) as cofactor.

The protein localises to the cytoplasm. The catalysed reaction is L-seryl-[protein] + ATP = O-phospho-L-seryl-[protein] + ADP + H(+). The enzyme catalyses L-threonyl-[protein] + ATP = O-phospho-L-threonyl-[protein] + ADP + H(+). It carries out the reaction L-threonylcarbamoyladenylate + adenosine(37) in tRNA = N(6)-L-threonylcarbamoyladenosine(37) in tRNA + AMP + H(+). Its function is as follows. Required for the formation of a threonylcarbamoyl group on adenosine at position 37 (t(6)A37) in tRNAs that read codons beginning with adenine. Is a component of the KEOPS complex that is probably involved in the transfer of the threonylcarbamoyl moiety of threonylcarbamoyl-AMP (TC-AMP) to the N6 group of A37. The Kae1 domain likely plays a direct catalytic role in this reaction. The Bud32 domain probably displays kinase activity that regulates Kae1 function. The protein is Probable bifunctional tRNA threonylcarbamoyladenosine biosynthesis protein of Methanococcus maripaludis (strain C5 / ATCC BAA-1333).